Reading from the N-terminus, the 32-residue chain is Giant hemoglobin AIV chain (32 aa).

The protein belongs to the globin family. In terms of assembly, giant hemoglobin is composed of four heme-containing chains (AI to AIV), and two linker chains (AV and AVI).

The protein is Giant hemoglobin AIV chain of Lamellibrachia sp. (Deep-sea giant tube worm).